The sequence spans 162 residues: Protein archease (162 aa).

The Ca(2+) site is built by Asp-34, Asp-161, and Ile-162.

This sequence belongs to the archease family. As to quaternary structure, component of the tRNA-splicing ligase complex.

Functionally, component of the tRNA-splicing ligase complex required to facilitate the enzymatic turnover of catalytic subunit RTCB. Together with ddx1, acts by facilitating the guanylylation of RTCB, a key intermediate step in tRNA ligation. The sequence is that of Protein archease from Ictalurus punctatus (Channel catfish).